The following is a 124-amino-acid chain: Small ribosomal subunit protein uS12 (124 aa).

The disordered stretch occupies residues 1–27 (MPTINQLIRKPRKSQTEKTASPALQNC). A compositionally biased stretch (polar residues) spans 17-27 (EKTASPALQNC). Aspartate 89 is modified (3-methylthioaspartic acid).

The protein belongs to the universal ribosomal protein uS12 family. In terms of assembly, part of the 30S ribosomal subunit. Contacts proteins S8 and S17. May interact with IF1 in the 30S initiation complex.

With S4 and S5 plays an important role in translational accuracy. Its function is as follows. Interacts with and stabilizes bases of the 16S rRNA that are involved in tRNA selection in the A site and with the mRNA backbone. Located at the interface of the 30S and 50S subunits, it traverses the body of the 30S subunit contacting proteins on the other side and probably holding the rRNA structure together. The combined cluster of proteins S8, S12 and S17 appears to hold together the shoulder and platform of the 30S subunit. The protein is Small ribosomal subunit protein uS12 of Borreliella afzelii (strain PKo) (Borrelia afzelii).